Reading from the N-terminus, the 309-residue chain is Uricase-2 isozyme 2 (309 aa).

Active-site charge relay system residues include Lys-18 and Thr-64. 7 residues coordinate urate: Thr-64, Asp-65, Phe-166, Arg-183, Val-238, Gln-239, and Asn-265. His-267 serves as the catalytic Charge relay system.

The protein belongs to the uricase family. Homotetramer.

Its subcellular location is the peroxisome. The enzyme catalyses urate + O2 + H2O = 5-hydroxyisourate + H2O2. Its pathway is purine metabolism; urate degradation; (S)-allantoin from urate: step 1/3. Its function is as follows. Catalyzes the oxidation of uric acid to 5-hydroxyisourate, which is further processed to form (S)-allantoin. The protein is Uricase-2 isozyme 2 of Glycine max (Soybean).